The chain runs to 234 residues: Golgi SNAP receptor complex member 1 (234 aa).

The Cytoplasmic portion of the chain corresponds to 1-212; the sequence is MSETWEALRK…MQKIKTKKQK (212 aa). Residues 54–121 adopt a coiled-coil conformation; it reads VTTEIEGLIE…RDNVDQVLQR (68 aa). Residues 213-233 form a helical; Anchor for type IV membrane protein membrane-spanning segment; it reads NTMILAGVISACLIFTIFWII. Position 234 (Asn234) is a topological domain, vesicular.

This sequence belongs to the GOSR1 family. Component of several multiprotein Golgi SNARE complexes.

Its subcellular location is the golgi apparatus membrane. Involved in transport from the ER to the Golgi apparatus as well as in intra-Golgi transport. It belongs to a super-family of proteins called t-SNAREs or soluble NSF (N-ethylmaleimide-sensitive factor) attachment protein receptor. Cooperates with ykt-6 for proper expression of Golgi-resident proteins. Required along with ykt-6 for normal embryonic development, seam cell division or differentiation, and ray formation. This chain is Golgi SNAP receptor complex member 1, found in Caenorhabditis briggsae.